A 243-amino-acid polypeptide reads, in one-letter code: Sugar fermentation stimulation protein homolog (243 aa).

The protein belongs to the SfsA family.

In Acaryochloris marina (strain MBIC 11017), this protein is Sugar fermentation stimulation protein homolog.